Here is a 231-residue protein sequence, read N- to C-terminus: Probable glutathione S-transferase GSTU1 (231 aa).

Positions Lys-5 to Pro-84 constitute a GST N-terminal domain. Residues Ser-15, Lys-42, Ile-56, and Glu-68–Ser-69 each bind glutathione. One can recognise a GST C-terminal domain in the interval Ala-97–Phe-220.

Belongs to the GST superfamily. Tau family.

It carries out the reaction RX + glutathione = an S-substituted glutathione + a halide anion + H(+). Conjugation of reduced glutathione to a wide number of exogenous and endogenous hydrophobic electrophiles. The chain is Probable glutathione S-transferase GSTU1 (GSTU1) from Oryza sativa subsp. japonica (Rice).